Here is a 247-residue protein sequence, read N- to C-terminus: Oil body-associated protein 2A (247 aa).

Residues Met-1–Lys-26 form a disordered region.

The protein belongs to the OBAP family.

The chain is Oil body-associated protein 2A from Arabidopsis thaliana (Mouse-ear cress).